Reading from the N-terminus, the 314-residue chain is Aspartate carbamoyltransferase catalytic subunit (314 aa).

Residues Arg58 and Thr59 each coordinate carbamoyl phosphate. Lys86 provides a ligand contact to L-aspartate. 3 residues coordinate carbamoyl phosphate: Arg108, His136, and Gln139. The L-aspartate site is built by Arg169 and Arg223. Carbamoyl phosphate contacts are provided by Gly264 and Pro265.

Belongs to the aspartate/ornithine carbamoyltransferase superfamily. ATCase family. Heterododecamer (2C3:3R2) of six catalytic PyrB chains organized as two trimers (C3), and six regulatory PyrI chains organized as three dimers (R2).

It catalyses the reaction carbamoyl phosphate + L-aspartate = N-carbamoyl-L-aspartate + phosphate + H(+). It functions in the pathway pyrimidine metabolism; UMP biosynthesis via de novo pathway; (S)-dihydroorotate from bicarbonate: step 2/3. Functionally, catalyzes the condensation of carbamoyl phosphate and aspartate to form carbamoyl aspartate and inorganic phosphate, the committed step in the de novo pyrimidine nucleotide biosynthesis pathway. The sequence is that of Aspartate carbamoyltransferase catalytic subunit from Roseobacter denitrificans (strain ATCC 33942 / OCh 114) (Erythrobacter sp. (strain OCh 114)).